Here is a 59-residue protein sequence, read N- to C-terminus: Large ribosomal subunit protein bL33 (59 aa).

Residues 26 to 59 form a disordered region; sequence RYTTTKNKKNNTERLVLKKYNPNLKKHTEHKEIK.

It belongs to the bacterial ribosomal protein bL33 family.

This Chlorobium phaeobacteroides (strain BS1) protein is Large ribosomal subunit protein bL33.